Reading from the N-terminus, the 112-residue chain is uncharacterized protein (112 aa).

The signal sequence occupies residues 1 to 25; sequence MKGTKLAVVVGMTVAAVSLAAPAQA.

This is an uncharacterized protein from Mycobacterium tuberculosis (strain CDC 1551 / Oshkosh).